The following is a 793-amino-acid chain: Putative potassium transporter 12 (793 aa).

At 1 to 54 (MASISDSETTNHGSIWDLDQNLDQPMDEEASRLKNMYTEKKFSSILLLRLAFQS) the chain is on the cytoplasmic side. A helical membrane pass occupies residues 55–75 (LGVVFGDLGTSPLYVFYNIFP). Residues 76–87 (HGVDDDEDVIGA) lie on the Extracellular side of the membrane. The helical transmembrane segment at 88 to 108 (LSLIIYTLTLIPLMKYVFVVL) threads the bilayer. The Cytoplasmic portion of the chain corresponds to 109–175 (RANDNGQGGT…EGHVYKKNCL (67 aa)). Residues 176 to 196 (LILVLIGTCTAIGDGILTPAI) traverse the membrane as a helical segment. At 197 to 215 (SVLSASGGIRVQNQKMSTD) the chain is on the extracellular side. Residues 216 to 236 (VVVVVAVIILIGLFSMQHYGT) form a helical membrane-spanning segment. The Cytoplasmic portion of the chain corresponds to 237–238 (DK). A helical membrane pass occupies residues 239 to 259 (VGWLFAPIVLLWFILIGTIGA). The Extracellular segment spans residues 260-289 (LNIHKYNSSVLKAYNPVYIYRYFRRGKSES). Residue Asn-266 is glycosylated (N-linked (GlcNAc...) asparagine). Residues 290-310 (WTSLGGIMLSITGTEALYADL) form a helical membrane-spanning segment. Residues 311–315 (CHFPV) are Cytoplasmic-facing. The chain crosses the membrane as a helical span at residues 316-338 (LAIQIAFTLVVFPCLLLAYTGQA). The Extracellular portion of the chain corresponds to 339–359 (AYIISNKDHVVDAFYRSIPDT). The chain crosses the membrane as a helical span at residues 360–380 (IYWPVFIIATLAAIVASQATI). Over 381 to 411 (SATYSIIKQALALGCFPRVSVVHTSKKFLGQ) the chain is Cytoplasmic. A helical membrane pass occupies residues 412 to 432 (IYIPDINWVLMILCIAVTAGF). At 433-444 (KNQSQIGNAYGT) the chain is on the extracellular side. A glycan (N-linked (GlcNAc...) asparagine) is linked at Asn-434. A helical membrane pass occupies residues 445–465 (AVVIVMLVTTFLMVPIMLLVW). Topologically, residues 466–468 (KSH) are cytoplasmic. A helical membrane pass occupies residues 469–489 (WILVVIFIVLSLMVELPYFTA). The Extracellular segment spans residues 490–496 (CINKVDQ). A helical transmembrane segment spans residues 497-517 (GGWVPLVVATTCFIIMYVWHF). The Cytoplasmic portion of the chain corresponds to 518-793 (CTVKRYEFEM…LLNVGQIYYI (276 aa)).

The protein belongs to the HAK/KUP transporter (TC 2.A.72.3) family.

The protein resides in the membrane. Functionally, high-affinity potassium transporter. In Oryza sativa subsp. japonica (Rice), this protein is Putative potassium transporter 12 (HAK12).